A 431-amino-acid chain; its full sequence is Probable carboxylic ester hydrolase LipM (431 aa).

3 helical membrane-spanning segments follow: residues 7–27 (IHVI…AATI), 38–58 (FASL…LPTL), and 75–95 (PVRA…LNLS). Active-site residues include Ser-261, Asp-357, and His-390.

This sequence belongs to the 'GDXG' lipolytic enzyme family.

Its subcellular location is the membrane. In Mycobacterium tuberculosis (strain ATCC 25618 / H37Rv), this protein is Probable carboxylic ester hydrolase LipM.